The sequence spans 231 residues: Cutinase 2 (231 aa).

The N-terminal stretch at Met-1–Ala-16 is a signal peptide. Cys-48 and Cys-126 are joined by a disulfide. Ser-137 (nucleophile) is an active-site residue. An intrachain disulfide couples Cys-188 to Cys-195. The active site involves Asp-192. Residue His-205 is the Proton donor/acceptor of the active site.

Belongs to the cutinase family. The 2 disulfide bonds play a critical role in holding the catalytic residues in juxta-position; reduction of the disulfide bridges results in the complete inactivation of the enzyme.

The protein localises to the secreted. It catalyses the reaction cutin + H2O = cutin monomers.. Catalyzes the hydrolysis of complex carboxylic polyesters found in the cell wall of plants. Degrades cutin, a macromolecule that forms the structure of the plant cuticle. Allows pathogenic fungi to penetrate through the cuticular barrier into the host plant during the initial stage of fungal infection. The sequence is that of Cutinase 2 (CUT2) from Fusarium vanettenii (Neocosmospora pisi).